The sequence spans 382 residues: Dual-specificity RNA methyltransferase RlmN (382 aa).

Glutamate 96 functions as the Proton acceptor in the catalytic mechanism. The region spanning 102–342 is the Radical SAM core domain; that stretch reads QGKRGTLCVS…VRTTRGEDID (241 aa). Cysteine 109 and cysteine 345 are joined by a disulfide. Residues cysteine 116, cysteine 120, and cysteine 123 each contribute to the [4Fe-4S] cluster site. S-adenosyl-L-methionine-binding positions include 170-171, serine 202, 224-226, and asparagine 302; these read GE and SLH. The active-site S-methylcysteine intermediate is the cysteine 345.

It belongs to the radical SAM superfamily. RlmN family. [4Fe-4S] cluster is required as a cofactor.

It is found in the cytoplasm. The catalysed reaction is adenosine(2503) in 23S rRNA + 2 reduced [2Fe-2S]-[ferredoxin] + 2 S-adenosyl-L-methionine = 2-methyladenosine(2503) in 23S rRNA + 5'-deoxyadenosine + L-methionine + 2 oxidized [2Fe-2S]-[ferredoxin] + S-adenosyl-L-homocysteine. The enzyme catalyses adenosine(37) in tRNA + 2 reduced [2Fe-2S]-[ferredoxin] + 2 S-adenosyl-L-methionine = 2-methyladenosine(37) in tRNA + 5'-deoxyadenosine + L-methionine + 2 oxidized [2Fe-2S]-[ferredoxin] + S-adenosyl-L-homocysteine. In terms of biological role, specifically methylates position 2 of adenine 2503 in 23S rRNA and position 2 of adenine 37 in tRNAs. m2A2503 modification seems to play a crucial role in the proofreading step occurring at the peptidyl transferase center and thus would serve to optimize ribosomal fidelity. This Pseudomonas fluorescens (strain Pf0-1) protein is Dual-specificity RNA methyltransferase RlmN.